The chain runs to 231 residues: MKFNFITLFPDKIQSYFSEGLQQKAIESGVFSVNIIQLRNFSGNKHNRVDDTIYGGGPGMLLRVEPIHKAILSLGEEKGIVILTSPSGIPFNQSIAMDLKKGGKPLTFISGYYEGVDHRVTEHLVDMEMSLGNYVLSAGDLASICIADAVSRLLPGFLGADESLLDESHNHPDILEYPQFTKPSEYNGWKVPDVLLSGNHASILAWREQNRKKIERGNYESTFKRSADSGC.

S-adenosyl-L-methionine contacts are provided by residues Gly111 and 131–136 (LGNYVL).

The protein belongs to the RNA methyltransferase TrmD family. In terms of assembly, homodimer.

It is found in the cytoplasm. It carries out the reaction guanosine(37) in tRNA + S-adenosyl-L-methionine = N(1)-methylguanosine(37) in tRNA + S-adenosyl-L-homocysteine + H(+). Specifically methylates guanosine-37 in various tRNAs. This chain is tRNA (guanine-N(1)-)-methyltransferase, found in Leptospira interrogans serogroup Icterohaemorrhagiae serovar copenhageni (strain Fiocruz L1-130).